Here is a 71-residue protein sequence, read N- to C-terminus: DNA-directed RNA polymerase subunit omega (71 aa).

This sequence belongs to the RNA polymerase subunit omega family. The RNAP catalytic core consists of 2 alpha, 1 beta, 1 beta' and 1 omega subunit. When a sigma factor is associated with the core the holoenzyme is formed, which can initiate transcription.

The enzyme catalyses RNA(n) + a ribonucleoside 5'-triphosphate = RNA(n+1) + diphosphate. Its function is as follows. Promotes RNA polymerase assembly. Latches the N- and C-terminal regions of the beta' subunit thereby facilitating its interaction with the beta and alpha subunits. The protein is DNA-directed RNA polymerase subunit omega of Campylobacter concisus (strain 13826).